The following is a 189-amino-acid chain: Small ribosomal subunit protein uS5 (189 aa).

An S5 DRBM domain is found at 22–85; sequence LIDKLVTINR…ERAKRGMIRV (64 aa). The disordered stretch occupies residues 164–189; sequence SVASRRGKKVADLFGPKREKEAPADV. Residues 172–189 show a composition bias toward basic and acidic residues; that stretch reads KVADLFGPKREKEAPADV.

It belongs to the universal ribosomal protein uS5 family. In terms of assembly, part of the 30S ribosomal subunit. Contacts proteins S4 and S8.

Its function is as follows. With S4 and S12 plays an important role in translational accuracy. Functionally, located at the back of the 30S subunit body where it stabilizes the conformation of the head with respect to the body. The protein is Small ribosomal subunit protein uS5 of Acidiphilium cryptum (strain JF-5).